A 122-amino-acid polypeptide reads, in one-letter code: Phosphoribosyl-ATP pyrophosphatase (122 aa).

This sequence belongs to the PRA-PH family.

It localises to the cytoplasm. The enzyme catalyses 1-(5-phospho-beta-D-ribosyl)-ATP + H2O = 1-(5-phospho-beta-D-ribosyl)-5'-AMP + diphosphate + H(+). The protein operates within amino-acid biosynthesis; L-histidine biosynthesis; L-histidine from 5-phospho-alpha-D-ribose 1-diphosphate: step 2/9. In Burkholderia mallei (strain NCTC 10247), this protein is Phosphoribosyl-ATP pyrophosphatase.